The sequence spans 486 residues: Glycogen synthase (486 aa).

Lys-20 is a binding site for ADP-alpha-D-glucose.

It belongs to the glycosyltransferase 1 family. Bacterial/plant glycogen synthase subfamily.

It catalyses the reaction [(1-&gt;4)-alpha-D-glucosyl](n) + ADP-alpha-D-glucose = [(1-&gt;4)-alpha-D-glucosyl](n+1) + ADP + H(+). It participates in glycan biosynthesis; glycogen biosynthesis. Functionally, synthesizes alpha-1,4-glucan chains using ADP-glucose. The sequence is that of Glycogen synthase from Aeromonas salmonicida (strain A449).